The chain runs to 125 residues: Small ribosomal subunit protein uS12 (125 aa).

At aspartate 89 the chain carries 3-methylthioaspartic acid.

Belongs to the universal ribosomal protein uS12 family. In terms of assembly, part of the 30S ribosomal subunit. Contacts proteins S8 and S17. May interact with IF1 in the 30S initiation complex.

Functionally, with S4 and S5 plays an important role in translational accuracy. In terms of biological role, interacts with and stabilizes bases of the 16S rRNA that are involved in tRNA selection in the A site and with the mRNA backbone. Located at the interface of the 30S and 50S subunits, it traverses the body of the 30S subunit contacting proteins on the other side and probably holding the rRNA structure together. The combined cluster of proteins S8, S12 and S17 appears to hold together the shoulder and platform of the 30S subunit. The protein is Small ribosomal subunit protein uS12 of Ralstonia nicotianae (strain ATCC BAA-1114 / GMI1000) (Ralstonia solanacearum).